A 264-amino-acid polypeptide reads, in one-letter code: Undecaprenyl-diphosphatase (264 aa).

Transmembrane regions (helical) follow at residues 1-21 (MDLI…FLPI), 39-59 (QGLA…AVYF), 87-107 (WYLI…DDLI), 111-131 (LRST…LWVA), 144-164 (IALS…IPGT), 187-207 (FSFL…GLQL), 208-228 (VLSA…LSAV), and 244-264 (IGML…FIAV).

This sequence belongs to the UppP family.

The protein resides in the cell inner membrane. It carries out the reaction di-trans,octa-cis-undecaprenyl diphosphate + H2O = di-trans,octa-cis-undecaprenyl phosphate + phosphate + H(+). Catalyzes the dephosphorylation of undecaprenyl diphosphate (UPP). Confers resistance to bacitracin. The chain is Undecaprenyl-diphosphatase from Teredinibacter turnerae (strain ATCC 39867 / T7901).